The following is a 78-amino-acid chain: MQVLVRDNNVDQALRVLKKKMQREGLFREMKARSAYEKPSEKRAREKGEAVRRQRKLARKKLQREGLLPAPKKAVRAR.

Residues Met-30–Arg-52 are compositionally biased toward basic and acidic residues. A disordered region spans residues Met-30–Arg-78. The segment covering Arg-53 to Leu-62 has biased composition (basic residues).

It belongs to the bacterial ribosomal protein bS21 family.

In Rhizobium etli (strain ATCC 51251 / DSM 11541 / JCM 21823 / NBRC 15573 / CFN 42), this protein is Small ribosomal subunit protein bS21A.